The following is a 199-amino-acid chain: Transgelin-3 (199 aa).

Residues A24–A136 enclose the Calponin-homology (CH) domain. The residue at position 163 (S163) is a Phosphoserine. Residues I174–M199 form a Calponin-like repeat. The span at L176–G188 shows a compositional bias: polar residues. Residues L176–M199 are disordered.

This sequence belongs to the calponin family.

This Pongo abelii (Sumatran orangutan) protein is Transgelin-3 (TAGLN3).